Consider the following 245-residue polypeptide: 4-hydroxy-tetrahydrodipicolinate reductase (245 aa).

NAD(+)-binding positions include 7 to 12, 75 to 77, and 102 to 105; these read GAKGKV, GTT, and APNF. The active-site Proton donor/acceptor is the His132. His133 is a (S)-2,3,4,5-tetrahydrodipicolinate binding site. The active-site Proton donor is the Lys136. Residue 142 to 143 coordinates (S)-2,3,4,5-tetrahydrodipicolinate; that stretch reads GT.

The protein belongs to the DapB family.

It localises to the cytoplasm. It carries out the reaction (S)-2,3,4,5-tetrahydrodipicolinate + NAD(+) + H2O = (2S,4S)-4-hydroxy-2,3,4,5-tetrahydrodipicolinate + NADH + H(+). The catalysed reaction is (S)-2,3,4,5-tetrahydrodipicolinate + NADP(+) + H2O = (2S,4S)-4-hydroxy-2,3,4,5-tetrahydrodipicolinate + NADPH + H(+). It participates in amino-acid biosynthesis; L-lysine biosynthesis via DAP pathway; (S)-tetrahydrodipicolinate from L-aspartate: step 4/4. Functionally, catalyzes the conversion of 4-hydroxy-tetrahydrodipicolinate (HTPA) to tetrahydrodipicolinate. The chain is 4-hydroxy-tetrahydrodipicolinate reductase from Mycobacterium marinum (strain ATCC BAA-535 / M).